Reading from the N-terminus, the 188-residue chain is F-box only protein 36 (188 aa).

Residues 91–137 form the F-box domain; that stretch reads FDFLERLSDDLLLNIISYLDLEDIARLCQTSHRFAKLCMSDKLWEQI.

In terms of assembly, directly interacts with SKP1 and CUL1.

Its function is as follows. Substrate-recognition component of the SCF (SKP1-CUL1-F-box protein)-type E3 ubiquitin ligase complex. The protein is F-box only protein 36 (FBXO36) of Pongo abelii (Sumatran orangutan).